The following is a 677-amino-acid chain: Forkhead box protein P1 (677 aa).

Residues 1–18 (MMQESGTETKSNGSAIQN) show a composition bias toward polar residues. The tract at residues 1–43 (MMQESGTETKSNGSAIQNGSGGSNHLLECGGLREGRSNGETPA) is disordered. Ser83 carries the phosphoserine modification. Polar residues predominate over residues 270–283 (IMNPHASTNGQLSV). The disordered stretch occupies residues 270-298 (IMNPHASTNGQLSVHTPKRESLSHEEHPH). Residues 286-298 (PKRESLSHEEHPH) are compositionally biased toward basic and acidic residues. Lys287 participates in a covalent cross-link: Glycyl lysine isopeptide (Lys-Gly) (interchain with G-Cter in SUMO2). The C2H2-type zinc-finger motif lies at 306-331 (GVCKWPGCEAVCEDFQSFLKHLNSEH). Residues 348-369 (VQQLELQLAKDKERLQAMMTHL) form a leucine-zipper region. Residues Lys372 and Lys377 each participate in a glycyl lysine isopeptide (Lys-Gly) (interchain with G-Cter in SUMO2) cross-link. The tract at residues 382–386 (PLNLV) is CTBP1-binding. Polar residues predominate over residues 390–403 (TLSKSASEASPQSL). Residues 390–422 (TLSKSASEASPQSLPHTPTTPTAPLTPVTQGPS) are disordered. Residues 404 to 418 (PHTPTTPTAPLTPVT) show a composition bias toward low complexity. Lys442 is covalently cross-linked (Glycyl lysine isopeptide (Lys-Gly) (interchain with G-Cter in SUMO2)). Positions 465-555 (RPPFTYASLI…PQKISGNPSL (91 aa)) form a DNA-binding region, fork-head. Positions 611 to 677 (EHTNSNESDS…EDEPVNEDME (67 aa)) are disordered. Over residues 612-623 (HTNSNESDSSPG) the composition is skewed to polar residues. Thr653 is subject to Phosphothreonine. Position 658 is a phosphoserine (Ser658). Residues 667 to 677 (YEDEPVNEDME) are compositionally biased toward acidic residues.

In terms of assembly, forms homodimers and heterodimers with FOXP2 and FOXP4. Dimerization is required for DNA-binding. Self-associates. Interacts with CTBP1. Interacts with NCOR2 and AR. Interacts with FOXP2. Interacts with TBR1. Interacts with AURKA; this interaction facilitates the phosphorylation of FOXP1, which suppresses the expression of FBXL7. Interacts with ZMYM2. As to expression, isoform 8 is specifically expressed in embryonic stem cells.

Its subcellular location is the nucleus. Functionally, transcriptional repressor. Can act with CTBP1 to synergistically repress transcription but CTPBP1 is not essential. Plays an important role in the specification and differentiation of lung epithelium. Acts cooperatively with FOXP4 to regulate lung secretory epithelial cell fate and regeneration by restricting the goblet cell lineage program; the function may involve regulation of AGR2. Essential transcriptional regulator of B-cell development. Involved in regulation of cardiac muscle cell proliferation. Involved in the columnar organization of spinal motor neurons. Promotes the formation of the lateral motor neuron column (LMC) and the preganglionic motor column (PGC) and is required for respective appropriate motor axon projections. The segment-appropriate generation of spinal cord motor columns requires cooperation with other Hox proteins. Can regulate PITX3 promoter activity; may promote midbrain identity in embryonic stem cell-derived dopamine neurons by regulating PITX3. Negatively regulates the differentiation of T follicular helper cells T(FH)s. Involved in maintenance of hair follicle stem cell quiescence; the function probably involves regulation of FGF18. Represses transcription of various pro-apoptotic genes and cooperates with NF-kappa B-signaling in promoting B-cell expansion by inhibition of caspase-dependent apoptosis. Binds to CSF1R promoter elements and is involved in regulation of monocyte differentiation and macrophage functions; repression of CSF1R in monocytes seems to involve NCOR2 as corepressor. Involved in endothelial cell proliferation, tube formation and migration indicative for a role in angiogenesis; the role in neovascularization seems to implicate suppression of SEMA5B. Can negatively regulate androgen receptor signaling. Acts as a transcriptional activator of the FBXL7 promoter; this activity is regulated by AURKA. In terms of biological role, involved in transcriptional regulation in embryonic stem cells (ESCs). Stimulates expression of transcription factors that are required for pluripotency and decreases expression of differentiation-associated genes. Has distinct DNA-binding specifities as compared to the canonical form and preferentially binds DNA with the sequence 5'-CGATACAA-3' (or closely related sequences). Promotes ESC self-renewal and pluripotency. The sequence is that of Forkhead box protein P1 (FOXP1) from Homo sapiens (Human).